A 216-amino-acid polypeptide reads, in one-letter code: Uracil phosphoribosyltransferase (216 aa).

5-phospho-alpha-D-ribose 1-diphosphate-binding positions include R85, R110, and D135–S143. Residues I200 and G205 to A207 contribute to the uracil site. A 5-phospho-alpha-D-ribose 1-diphosphate-binding site is contributed by D206.

It belongs to the UPRTase family. The cofactor is Mg(2+).

The enzyme catalyses UMP + diphosphate = 5-phospho-alpha-D-ribose 1-diphosphate + uracil. Its pathway is pyrimidine metabolism; UMP biosynthesis via salvage pathway; UMP from uracil: step 1/1. With respect to regulation, allosterically activated by GTP. In terms of biological role, catalyzes the conversion of uracil and 5-phospho-alpha-D-ribose 1-diphosphate (PRPP) to UMP and diphosphate. The protein is Uracil phosphoribosyltransferase of Burkholderia lata (strain ATCC 17760 / DSM 23089 / LMG 22485 / NCIMB 9086 / R18194 / 383).